The chain runs to 105 residues: UPF0145 protein jk0060 (105 aa).

Belongs to the UPF0145 family.

The chain is UPF0145 protein jk0060 from Corynebacterium jeikeium (strain K411).